The chain runs to 551 residues: MSNGSIRPDEVTDILRRELGDFETEAEEYEAGTVLEAGDGIATLYGLSNAQASELVEFPEQDVEGMVLNLEEDNVGVILFGDVDAVSEGDEARRTGRIASVGVNENMLGRVIDPLGRPLDGKGPIEGEKTVLPLERKAPGVIYREPVEEPLQTGIKAIDSMIPVGRGQRELVIGDRQTGKTAVLTDTIINQKKTHQEGTDSGDPVYCVYVAVGQKDSTVAQVQRDLERNGALEHTVIVNASASMPTPLQYVAPFAGACIGEYFRDTGRDSLVCFDDLSKQAVAYRELSLLLRRPPGREAYPGDIFYLHSRLLERAAKIISDEEVATQMNGLPDALQDKVQGGGSLTALPVIETQAGDVSAYIPTNVISITDGQIYLETDLFNSGIRPAIDVGNSVSRVGGSAQIDAMKDVASTLRIDLSQYRELEAFAKFGSDLDPSTQQQLNRGERLVEILNQDQFSPVPVEEQVAIIYAAINGHLDDVPVDDIEDFEEEYLERLRLRHEDVLTEIRETEELTDAAEEVFEEVAADMADVYAEDEEEEEEDVLADEGATA.

Residue 174–181 (GDRQTGKT) coordinates ATP.

It belongs to the ATPase alpha/beta chains family. As to quaternary structure, F-type ATPases have 2 components, CF(1) - the catalytic core - and CF(0) - the membrane proton channel. CF(1) has five subunits: alpha(3), beta(3), gamma(1), delta(1), epsilon(1). CF(0) has three main subunits: a(1), b(2) and c(9-12). The alpha and beta chains form an alternating ring which encloses part of the gamma chain. CF(1) is attached to CF(0) by a central stalk formed by the gamma and epsilon chains, while a peripheral stalk is formed by the delta and b chains.

The protein resides in the cell inner membrane. It catalyses the reaction ATP + H2O + 4 H(+)(in) = ADP + phosphate + 5 H(+)(out). Its function is as follows. Produces ATP from ADP in the presence of a proton gradient across the membrane. The alpha chain is a regulatory subunit. This is ATP synthase subunit alpha from Salinibacter ruber (strain DSM 13855 / M31).